The following is a 375-amino-acid chain: Growth/differentiation factor 8 (375 aa).

An N-terminal signal peptide occupies residues 1 to 18; the sequence is MQKLQISVYIYLFMLIVA. Positions 19-266 are excised as a propeptide; the sequence is GPVDLNENSE…VTDTPKRSRR (248 aa). Residues N47 and N71 are each glycosylated (N-linked (GlcNAc...) asparagine). 4 disulfides stabilise this stretch: C272–C282, C281–C340, C309–C372, and C313–C374.

Belongs to the TGF-beta family. Homodimer; disulfide-linked. Interacts with WFIKKN2, leading to inhibit its activity. Interacts with FSTL3. In terms of processing, synthesized as large precursor molecule that undergoes proteolytic cleavage to generate an N-terminal propeptide and a disulfide linked C-terminal dimer, which is the biologically active molecule. The circulating form consists of a latent complex of the C-terminal dimer and other proteins, including its propeptide, which maintain the C-terminal dimer in a latent, inactive state. Ligand activation requires additional cleavage of the prodomain by a tolloid-like metalloproteinase.

The protein localises to the secreted. Functionally, acts specifically as a negative regulator of skeletal muscle growth. This Bos gaurus (Seladang) protein is Growth/differentiation factor 8 (MSTN).